The following is a 199-amino-acid chain: Putative lectin L633 (199 aa).

An N-terminal signal peptide occupies residues 1–25 (MNILLLLMLLTSIILLVILIFLAYN). Polar residues predominate over residues 35 to 48 (CITPAPESQSISPD). The disordered stretch occupies residues 35–74 (CITPAPESQSISPDQTTQLQTTTPVTSTPSNPTPTTIIPN). The segment covering 49-73 (QTTQLQTTTPVTSTPSNPTPTTIIP) has biased composition (low complexity). A Bulb-type lectin domain is found at 84–195 (EIVSNGDNVL…LGQELWCATR (112 aa)). N-linked (GlcNAc...) asparagine; by host glycosylation occurs at N121.

The protein localises to the secreted. This is Putative lectin L633 from Acanthamoeba polyphaga (Amoeba).